The chain runs to 724 residues: MEGERKNNNKRWYFTREQLENSPSRRFGVDSDKELSYRQQAANLLQDMGQRLNVSQLTINTAIVYMHRFYMIQSFTQFHRYSMAPAALFLAAKVEEQPKKLEHVIKVAHTCLHPQESLPDTRSEAYLQQVQDLVILESIILQTLGFELTIDHPHTHVVKCTQLVRASKDLAQTSYFMATNSLHLTTFSLQYTPPVVACVCIHLACKWSNWEIPVSTDGKHWWEYVDATVTLELLDELTHEFLQILEKTPSRLKRIRNWRAYQAAMKTKPDDRGADENTSEQTILNMISQTSSDTTIAGLMSMSTASTSAVPSLPSSEESSSSLTSVDMLQGERWLSSQPPFKLEAAQGHRTSESLALIGVDHSLQQDGSSAFGSQKQASKSVPSAKVSLKEYRAKHAEELAAQKRQLENMEANVKSQYAYAAQNLLSHDSHSSVILKMPIESSENPERPFLDKADKSALKMRLPVASGDKAVSSKPEEIKMRIKVHSAGDKHNSIEDSVTKSREHKEKQRTHPSNHHHHHNHHSHRHSHLQLPAGPVSKRPSDPKHSSQTSTLAHKTYSLSSTLSSSSSTRKRGPPEETGAAVFDHPAKIAKSTKSSLNFPFPPLPTMTQLPGHSSDTSGLPFSQPSCKTRVPHMKLDKGPPGANGHNATQSIDYQDTVNMLHSLLSAQGVQPTQAPAFEFVHSYGEYMNPRAGAISSRSGTTDKPRPPPLPSEPPPPLPPLPK.

Ser117 carries the post-translational modification Phosphoserine. The Nuclear localization signal motif lies at Lys253–Asp270. Lys342 participates in a covalent cross-link: Glycyl lysine isopeptide (Lys-Gly) (interchain with G-Cter in SUMO2). Residues Ser384–Leu425 adopt a coiled-coil conformation. Phosphoserine is present on Ser388. At Lys390 the chain carries N6-acetyllysine. Lys415 participates in a covalent cross-link: Glycyl lysine isopeptide (Lys-Gly) (interchain with G-Cter in SUMO2). 3 positions are modified to ADP-ribosylserine: Ser416, Ser473, and Ser474. The tract at residues Ile479–Gln549 is histidine-rich domain (HRD). A Glycyl lysine isopeptide (Lys-Gly) (interchain with G-Cter in SUMO2) cross-link involves residue Lys480. Residues Ile483 to Glu507 show a composition bias toward basic and acidic residues. Disordered regions lie at residues Ile483 to His586 and Pro691 to Lys724. N6-(ADP-ribosyl)lysine is present on Lys484. The residue at position 486 (His486) is an ADP-ribosylhistidine. Phosphoserine is present on residues Ser494 and Ser498. Over residues Lys508–His529 the composition is skewed to basic residues. ADP-ribosylhistidine is present on His529. ADP-ribosylserine occurs at positions 548 and 551. His555 is subject to ADP-ribosylhistidine. The segment covering Ser559–Ser569 has biased composition (low complexity). Ser562 carries the ADP-ribosylserine modification. A compositionally biased stretch (pro residues) spans Pro708–Lys724.

It belongs to the cyclin family. Cyclin C subfamily. In terms of assembly, cyclin-T1 is the predominant cyclin that associates with CDK9 to form a heterodimer called P-TEFb. P-TEFb forms a complex with AFF4/AF5Q31. Component of a complex which is at least composed of HTATSF1/Tat-SF1, P-TEFb complex, RNA pol II, SUPT5H, and NCL/nucleolin. Component of the 7SK snRNP complex at least composed of P-TEFb (composed of CDK9 and CCNT1/cyclin-T1), HEXIM1, HEXIM2, BCDIN3, SART3 proteins and 7SK and U6 snRNAs. Interacts (via central region) with ZMYND8 (via N-terminus); the interaction is direct and the association appears to occur between homodimeric ZMYND8 and the activated form of the P-TEFb complex. Interacts with BRD4, targets chromatin binding. Interacts with JMJD6. Interacts with MDFIC. Interacts with HSF1. Interacts with HTATSF1. Interacts with TBX21. Post-translationally, ADP-ribosylation on serine residues by PARP1 in response to DNA damage disrupts the phase separation activity of CCNT1, thereby preventing activation of CDK9.

It is found in the nucleus. Its function is as follows. Regulatory subunit of the cyclin-dependent kinase pair (CDK9/cyclin-T1) complex, also called positive transcription elongation factor B (P-TEFb), which facilitates the transition from abortive to productive elongation by phosphorylating the CTD (C-terminal domain) of the large subunit of RNA polymerase II (RNA Pol II). Required to activate the protein kinase activity of CDK9: acts by mediating formation of liquid-liquid phase separation (LLPS) that enhances binding of P-TEFb to the CTD of RNA Pol II. In Mus musculus (Mouse), this protein is Cyclin-T1 (Ccnt1).